Here is a 486-residue protein sequence, read N- to C-terminus: Glutamyl-tRNA(Gln) amidotransferase subunit A (486 aa).

Catalysis depends on charge relay system residues K74 and S149. S173 acts as the Acyl-ester intermediate in catalysis.

This sequence belongs to the amidase family. GatA subfamily. In terms of assembly, heterotrimer of A, B and C subunits.

It carries out the reaction L-glutamyl-tRNA(Gln) + L-glutamine + ATP + H2O = L-glutaminyl-tRNA(Gln) + L-glutamate + ADP + phosphate + H(+). Functionally, allows the formation of correctly charged Gln-tRNA(Gln) through the transamidation of misacylated Glu-tRNA(Gln) in organisms which lack glutaminyl-tRNA synthetase. The reaction takes place in the presence of glutamine and ATP through an activated gamma-phospho-Glu-tRNA(Gln). This chain is Glutamyl-tRNA(Gln) amidotransferase subunit A, found in Prochlorococcus marinus (strain SARG / CCMP1375 / SS120).